The following is a 20-amino-acid chain: Brevinin-1ITb (20 aa).

Methionine 8 is subject to Methionine sulfoxide; partial. An intrachain disulfide couples cysteine 14 to cysteine 20.

Belongs to the frog skin active peptide (FSAP) family. Brevinin subfamily. Expressed by the skin glands.

The protein resides in the secreted. Functionally, antimicrobial peptide. This chain is Brevinin-1ITb, found in Rana italica (Italian stream frog).